Consider the following 352-residue polypeptide: Probable transcription factor At1g11510 (352 aa).

Disordered stretches follow at residues 1–132 (MSRR…GGEE) and 239–269 (MKSN…KNNC). Residues 56-66 (SGSDEETDSDS) are compositionally biased toward acidic residues. Composition is skewed to basic and acidic residues over residues 89–101 (KTSE…RSLE), 117–132 (VSGE…GGEE), and 241–259 (SNEK…HELD).

It belongs to the GeBP family.

In Arabidopsis thaliana (Mouse-ear cress), this protein is Probable transcription factor At1g11510.